The sequence spans 115 residues: Somatostatin-1 (115 aa).

A signal peptide spans 1–24 (MLSCRFQCALVLLSLAVVFSKVSA). Residues 25 to 88 (APSDLRLRQL…QDEVRLELDR (64 aa)) constitute a propeptide that is removed on maturation. Positions 65 to 95 (NDALDSSDLSRGADQDEVRLELDRSANSSPL) are disordered. Over residues 75–88 (RGADQDEVRLELDR) the composition is skewed to basic and acidic residues. Cysteine 104 and cysteine 115 are oxidised to a cystine.

This sequence belongs to the somatostatin family.

The protein resides in the secreted. Somatostatin inhibits the release of somatotropin. This is Somatostatin-1 (sst1) from Protopterus annectens (African lungfish).